A 350-amino-acid chain; its full sequence is Uroporphyrinogen decarboxylase (350 aa).

Residues 28 to 32 (RQAGR), D78, Y154, T209, and H325 contribute to the substrate site.

This sequence belongs to the uroporphyrinogen decarboxylase family. As to quaternary structure, homodimer.

It localises to the cytoplasm. It carries out the reaction uroporphyrinogen III + 4 H(+) = coproporphyrinogen III + 4 CO2. It functions in the pathway porphyrin-containing compound metabolism; protoporphyrin-IX biosynthesis; coproporphyrinogen-III from 5-aminolevulinate: step 4/4. Catalyzes the decarboxylation of four acetate groups of uroporphyrinogen-III to yield coproporphyrinogen-III. This chain is Uroporphyrinogen decarboxylase, found in Nitrobacter hamburgensis (strain DSM 10229 / NCIMB 13809 / X14).